The chain runs to 276 residues: Rhomboid protease GlpG (276 aa).

The next 6 membrane-spanning stretches (helical) occupy residues 94-114 (GPVTWVMMIACVVVFIAMQIL), 142-162 (ALMHFSLMHILFNLLWWWYLG), 169-189 (LGSGKLIVITLISALLSGYVQ), 192-212 (FSGPWFGGLSGVVYALMGYVW), 229-249 (LIIFALIWIVAGWFDLFGMSM), and 250-270 (ANGAHIAGLAVGLAMAFVDSL). Ser-201 (nucleophile) is an active-site residue. The active site involves His-254.

The protein belongs to the peptidase S54 family.

The protein resides in the cell inner membrane. The enzyme catalyses Cleaves type-1 transmembrane domains using a catalytic dyad composed of serine and histidine that are contributed by different transmembrane domains.. Its function is as follows. Rhomboid-type serine protease that catalyzes intramembrane proteolysis. The chain is Rhomboid protease GlpG from Escherichia coli O157:H7.